An 86-amino-acid chain; its full sequence is Progonadoliberin IIA (86 aa).

The signal sequence occupies residues 1 to 24 (MVHICRLFVVMGMLLCLSAQFASS). Glutamine 25 carries the pyrrolidone carboxylic acid modification. Glycine 34 is subject to Glycine amide.

This sequence belongs to the GnRH family. In terms of tissue distribution, olfactory bulbs, hypothalamus and telencephalon, midbrain and posterior brain areas.

The protein resides in the secreted. Stimulates the secretion of gonadotropins. This Carassius auratus (Goldfish) protein is Progonadoliberin IIA (gnrh2a).